A 410-amino-acid polypeptide reads, in one-letter code: Shaggy-related protein kinase epsilon (410 aa).

Ala-2 bears the N-acetylalanine mark. One can recognise a Protein kinase domain in the interval Tyr-74–Phe-358. ATP-binding positions include Val-80–Val-88 and Lys-103. Residue Asp-199 is the Proton acceptor of the active site. The residue at position 234 (Tyr-234) is a Phosphotyrosine.

This sequence belongs to the protein kinase superfamily. CMGC Ser/Thr protein kinase family. GSK-3 subfamily. In terms of assembly, binds to KIB1. In terms of processing, autophosphorylated mainly on threonine and serine residues.

The enzyme catalyses L-seryl-[protein] + ATP = O-phospho-L-seryl-[protein] + ADP + H(+). It carries out the reaction L-threonyl-[protein] + ATP = O-phospho-L-threonyl-[protein] + ADP + H(+). In terms of biological role, may mediate extracellular signals to regulate transcription in differentiating cells. The sequence is that of Shaggy-related protein kinase epsilon (ASK5) from Arabidopsis thaliana (Mouse-ear cress).